The following is a 203-amino-acid chain: Probable proteasome subunit beta type-1 (203 aa).

A propeptide spans 1–10 (removed in mature form); that stretch reads MMSNEKEMTG. Threonine 11 acts as the Nucleophile in catalysis.

It belongs to the peptidase T1B family. In terms of assembly, the 26S proteasome consists of a 20S proteasome core and two 19S regulatory subunits. The 20S proteasome core is composed of 28 subunits that are arranged in four stacked rings, resulting in a barrel-shaped structure. The two end rings are each formed by seven alpha subunits, and the two central rings are each formed by seven beta subunits. The catalytic chamber with the active sites is on the inside of the barrel.

The protein resides in the cytoplasm. The protein localises to the nucleus. The catalysed reaction is Cleavage of peptide bonds with very broad specificity.. In terms of biological role, the proteasome degrades poly-ubiquitinated proteins in the cytoplasm and in the nucleus. It is essential for the regulated turnover of proteins and for the removal of misfolded proteins. The proteasome is a multicatalytic proteinase complex that is characterized by its ability to cleave peptides with Arg, Phe, Tyr, Leu, and Glu adjacent to the leaving group at neutral or slightly basic pH. It has an ATP-dependent proteolytic activity. This Encephalitozoon cuniculi (strain GB-M1) (Microsporidian parasite) protein is Probable proteasome subunit beta type-1 (PRE3).